A 217-amino-acid chain; its full sequence is Phosphatidylserine decarboxylase proenzyme (217 aa).

The active-site Schiff-base intermediate with substrate; via pyruvic acid is the Ser-187. Ser-187 is modified (pyruvic acid (Ser); by autocatalysis).

The protein belongs to the phosphatidylserine decarboxylase family. PSD-A subfamily. As to quaternary structure, heterodimer of a large membrane-associated beta subunit and a small pyruvoyl-containing alpha subunit. The cofactor is pyruvate. Post-translationally, is synthesized initially as an inactive proenzyme. Formation of the active enzyme involves a self-maturation process in which the active site pyruvoyl group is generated from an internal serine residue via an autocatalytic post-translational modification. Two non-identical subunits are generated from the proenzyme in this reaction, and the pyruvate is formed at the N-terminus of the alpha chain, which is derived from the carboxyl end of the proenzyme. The post-translation cleavage follows an unusual pathway, termed non-hydrolytic serinolysis, in which the side chain hydroxyl group of the serine supplies its oxygen atom to form the C-terminus of the beta chain, while the remainder of the serine residue undergoes an oxidative deamination to produce ammonia and the pyruvoyl prosthetic group on the alpha chain.

It localises to the cell membrane. It carries out the reaction a 1,2-diacyl-sn-glycero-3-phospho-L-serine + H(+) = a 1,2-diacyl-sn-glycero-3-phosphoethanolamine + CO2. Its pathway is phospholipid metabolism; phosphatidylethanolamine biosynthesis; phosphatidylethanolamine from CDP-diacylglycerol: step 2/2. Catalyzes the formation of phosphatidylethanolamine (PtdEtn) from phosphatidylserine (PtdSer). This chain is Phosphatidylserine decarboxylase proenzyme, found in Thermobifida fusca (strain YX).